Consider the following 366-residue polypeptide: UDP-N-acetylglucosamine--N-acetylmuramyl-(pentapeptide) pyrophosphoryl-undecaprenol N-acetylglucosamine transferase (366 aa).

UDP-N-acetyl-alpha-D-glucosamine is bound by residues 10-12, asparagine 124, arginine 166, serine 196, and glutamine 297; that span reads TGG.

The protein belongs to the glycosyltransferase 28 family. MurG subfamily.

The protein localises to the cell membrane. The catalysed reaction is di-trans,octa-cis-undecaprenyl diphospho-N-acetyl-alpha-D-muramoyl-L-alanyl-D-glutamyl-meso-2,6-diaminopimeloyl-D-alanyl-D-alanine + UDP-N-acetyl-alpha-D-glucosamine = di-trans,octa-cis-undecaprenyl diphospho-[N-acetyl-alpha-D-glucosaminyl-(1-&gt;4)]-N-acetyl-alpha-D-muramoyl-L-alanyl-D-glutamyl-meso-2,6-diaminopimeloyl-D-alanyl-D-alanine + UDP + H(+). It participates in cell wall biogenesis; peptidoglycan biosynthesis. Functionally, cell wall formation. Catalyzes the transfer of a GlcNAc subunit on undecaprenyl-pyrophosphoryl-MurNAc-pentapeptide (lipid intermediate I) to form undecaprenyl-pyrophosphoryl-MurNAc-(pentapeptide)GlcNAc (lipid intermediate II). This is UDP-N-acetylglucosamine--N-acetylmuramyl-(pentapeptide) pyrophosphoryl-undecaprenol N-acetylglucosamine transferase from Alkaliphilus metalliredigens (strain QYMF).